A 602-amino-acid polypeptide reads, in one-letter code: Elongation factor 4 (602 aa).

Residues 6–188 (RNVRNFSIIA…RITEVVPEPA (183 aa)) form the tr-type G domain. GTP-binding positions include 18-23 (DHGKST) and 135-138 (NKID).

This sequence belongs to the TRAFAC class translation factor GTPase superfamily. Classic translation factor GTPase family. LepA subfamily.

It localises to the cell membrane. It catalyses the reaction GTP + H2O = GDP + phosphate + H(+). Its function is as follows. Required for accurate and efficient protein synthesis under certain stress conditions. May act as a fidelity factor of the translation reaction, by catalyzing a one-codon backward translocation of tRNAs on improperly translocated ribosomes. Back-translocation proceeds from a post-translocation (POST) complex to a pre-translocation (PRE) complex, thus giving elongation factor G a second chance to translocate the tRNAs correctly. Binds to ribosomes in a GTP-dependent manner. The chain is Elongation factor 4 from Oceanobacillus iheyensis (strain DSM 14371 / CIP 107618 / JCM 11309 / KCTC 3954 / HTE831).